We begin with the raw amino-acid sequence, 108 residues long: Competence protein ComGC (108 aa).

An N-terminal signal peptide occupies residues methionine 1–valine 13. Residues lysine 14–leucine 39 are may be involved in polymerization of ComGC. Phenylalanine 16 carries the N-methylphenylalanine modification. The helical transmembrane segment at phenylalanine 16–valine 36 threads the bilayer.

It belongs to the ComGC family. The transformation pili are flexible filaments, consisting mainly of the major pilin ComGC and smaller amounts of the minor pilins, including at least ComGD, ComGF and ComGG, and perhaps ComGE. Homodimer. Forms higher-order multimers. Interacts with ComGG; the interaction is probably direct. In terms of processing, undergoes proteolytic cleavage.

Its subcellular location is the cell membrane. The protein resides in the cell surface. It is found in the fimbrium. It localises to the secreted. In terms of biological role, major component of the type IV-like pilus (T4P) that plays a role in transformation. Transformation pili are dynamically extended and retracted, perhaps thereby promoting DNA uptake and transformation. Required for transformation. Required for DNA binding. This is Competence protein ComGC from Streptococcus pneumoniae serotype 4 (strain ATCC BAA-334 / TIGR4).